Consider the following 125-residue polypeptide: Large ribosomal subunit protein bL17 (125 aa).

This sequence belongs to the bacterial ribosomal protein bL17 family. In terms of assembly, part of the 50S ribosomal subunit. Contacts protein L32.

In Blochmanniella pennsylvanica (strain BPEN), this protein is Large ribosomal subunit protein bL17.